A 728-amino-acid chain; its full sequence is Catalase-peroxidase 1 (728 aa).

Residues 91–218 (WHGAGTYRIA…LAAVQMGLIY (128 aa)) constitute a cross-link (tryptophyl-tyrosyl-methioninium (Trp-Tyr) (with M-244)). Residue H92 is the Proton acceptor of the active site. Positions 218–244 (YVNPEGPDGKPDPVAAARDIRDTFARM) form a cross-link, tryptophyl-tyrosyl-methioninium (Tyr-Met) (with W-91). H259 is a heme b binding site.

This sequence belongs to the peroxidase family. Peroxidase/catalase subfamily. Homodimer or homotetramer. The cofactor is heme b. In terms of processing, formation of the three residue Trp-Tyr-Met cross-link is important for the catalase, but not the peroxidase activity of the enzyme.

The catalysed reaction is H2O2 + AH2 = A + 2 H2O. It carries out the reaction 2 H2O2 = O2 + 2 H2O. Its function is as follows. Bifunctional enzyme with both catalase and broad-spectrum peroxidase activity. This is Catalase-peroxidase 1 from Burkholderia vietnamiensis (strain G4 / LMG 22486) (Burkholderia cepacia (strain R1808)).